A 180-amino-acid polypeptide reads, in one-letter code: Large ribosomal subunit protein uL5c (180 aa).

It belongs to the universal ribosomal protein uL5 family. Part of the 50S ribosomal subunit; contacts the 5S rRNA.

The protein localises to the plastid. It localises to the chloroplast. In terms of biological role, binds 5S rRNA, forms part of the central protuberance of the 50S subunit. The sequence is that of Large ribosomal subunit protein uL5c (rpl5) from Tetradesmus obliquus (Green alga).